The following is a 282-amino-acid chain: 2-dehydro-3-deoxyphosphooctonate aldolase (282 aa).

This sequence belongs to the KdsA family.

The protein resides in the cytoplasm. It catalyses the reaction D-arabinose 5-phosphate + phosphoenolpyruvate + H2O = 3-deoxy-alpha-D-manno-2-octulosonate-8-phosphate + phosphate. The protein operates within carbohydrate biosynthesis; 3-deoxy-D-manno-octulosonate biosynthesis; 3-deoxy-D-manno-octulosonate from D-ribulose 5-phosphate: step 2/3. It participates in bacterial outer membrane biogenesis; lipopolysaccharide biosynthesis. In Shewanella sediminis (strain HAW-EB3), this protein is 2-dehydro-3-deoxyphosphooctonate aldolase.